We begin with the raw amino-acid sequence, 240 residues long: Phosphoribosylaminoimidazole-succinocarboxamide synthase (240 aa).

This sequence belongs to the SAICAR synthetase family.

It carries out the reaction 5-amino-1-(5-phospho-D-ribosyl)imidazole-4-carboxylate + L-aspartate + ATP = (2S)-2-[5-amino-1-(5-phospho-beta-D-ribosyl)imidazole-4-carboxamido]succinate + ADP + phosphate + 2 H(+). The protein operates within purine metabolism; IMP biosynthesis via de novo pathway; 5-amino-1-(5-phospho-D-ribosyl)imidazole-4-carboxamide from 5-amino-1-(5-phospho-D-ribosyl)imidazole-4-carboxylate: step 1/2. The polypeptide is Phosphoribosylaminoimidazole-succinocarboxamide synthase (Wolbachia pipientis subsp. Culex pipiens (strain wPip)).